Here is a 207-residue protein sequence, read N- to C-terminus: Ribosomal RNA small subunit methyltransferase G (207 aa).

S-adenosyl-L-methionine-binding positions include Gly-75, Phe-80, 126–127 (LE), and Arg-140.

The protein belongs to the methyltransferase superfamily. RNA methyltransferase RsmG family.

Its subcellular location is the cytoplasm. It carries out the reaction guanosine(527) in 16S rRNA + S-adenosyl-L-methionine = N(7)-methylguanosine(527) in 16S rRNA + S-adenosyl-L-homocysteine. In terms of biological role, specifically methylates the N7 position of guanine in position 527 of 16S rRNA. The chain is Ribosomal RNA small subunit methyltransferase G from Erythrobacter litoralis (strain HTCC2594).